The chain runs to 130 residues: Flagellar assembly factor FliW (130 aa).

The protein belongs to the FliW family. Interacts with translational regulator CsrA and flagellin(s).

Its subcellular location is the cytoplasm. Functionally, acts as an anti-CsrA protein, binds CsrA and prevents it from repressing translation of its target genes, one of which is flagellin. Binds to flagellin and participates in the assembly of the flagellum. This Borreliella burgdorferi (strain ATCC 35210 / DSM 4680 / CIP 102532 / B31) (Borrelia burgdorferi) protein is Flagellar assembly factor FliW.